A 373-amino-acid polypeptide reads, in one-letter code: Dual-specificity RNA methyltransferase RlmN (373 aa).

The active-site Proton acceptor is the Glu-94. The Radical SAM core domain maps to 100–339 (EDDRATLCVS…VIVRKTRGDD (240 aa)). An intrachain disulfide couples Cys-107 to Cys-344. The [4Fe-4S] cluster site is built by Cys-114, Cys-118, and Cys-121. S-adenosyl-L-methionine is bound by residues 168–169 (GE), Ser-200, 222–224 (SIH), and Asn-301. Cys-344 acts as the S-methylcysteine intermediate in catalysis.

This sequence belongs to the radical SAM superfamily. RlmN family. Requires [4Fe-4S] cluster as cofactor.

Its subcellular location is the cytoplasm. It catalyses the reaction adenosine(2503) in 23S rRNA + 2 reduced [2Fe-2S]-[ferredoxin] + 2 S-adenosyl-L-methionine = 2-methyladenosine(2503) in 23S rRNA + 5'-deoxyadenosine + L-methionine + 2 oxidized [2Fe-2S]-[ferredoxin] + S-adenosyl-L-homocysteine. The enzyme catalyses adenosine(37) in tRNA + 2 reduced [2Fe-2S]-[ferredoxin] + 2 S-adenosyl-L-methionine = 2-methyladenosine(37) in tRNA + 5'-deoxyadenosine + L-methionine + 2 oxidized [2Fe-2S]-[ferredoxin] + S-adenosyl-L-homocysteine. Functionally, specifically methylates position 2 of adenine 2503 in 23S rRNA and position 2 of adenine 37 in tRNAs. m2A2503 modification seems to play a crucial role in the proofreading step occurring at the peptidyl transferase center and thus would serve to optimize ribosomal fidelity. The chain is Dual-specificity RNA methyltransferase RlmN from Shewanella sp. (strain ANA-3).